We begin with the raw amino-acid sequence, 150 residues long: Large ribosomal subunit protein uL15 (150 aa).

Positions 1-13 (MADNDAIKVHDLR) are enriched in basic and acidic residues. Residues 1 to 44 (MADNDAIKVHDLRPAPGAKTAKTRVGRGEASKGKTAGRGTKGTK) form a disordered region.

The protein belongs to the universal ribosomal protein uL15 family. In terms of assembly, part of the 50S ribosomal subunit.

Binds to the 23S rRNA. This Micrococcus luteus (strain ATCC 4698 / DSM 20030 / JCM 1464 / CCM 169 / CCUG 5858 / IAM 1056 / NBRC 3333 / NCIMB 9278 / NCTC 2665 / VKM Ac-2230) (Micrococcus lysodeikticus) protein is Large ribosomal subunit protein uL15.